The following is a 563-amino-acid chain: Kelch repeat and BTB domain-containing protein 1 (563 aa).

A BTB domain is found at 21–88 (CDINIVINDE…IYGIPLSLTN (68 aa)). The BACK domain maps to 123–219 (CIDFYIYADK…SLLSPQVIKS (97 aa)). 6 Kelch repeats span residues 252–297 (IELI…VLDN), 298–346 (IIYM…ADDE), 347–395 (YIYC…MLNG), 397–441 (IYVI…VHAG), 442–492 (KIYI…SAHN), and 494–538 (LYVG…CEPI).

In terms of assembly, interacts (via BTB domain) with host CUL3.

The protein resides in the host cytoplasm. Its function is as follows. Probable substrate-specific adapter of CUL3-containing E3 ubiquitin-protein ligases which mediate the ubiquitination and subsequent proteasomal degradation of host target proteins. This Cowpox virus (strain Brighton Red) (CPV) protein is Kelch repeat and BTB domain-containing protein 1 (KBTB1).